Consider the following 795-residue polypeptide: Phenylalanine--tRNA ligase beta subunit (795 aa).

The 110-residue stretch at 39–148 folds into the tRNA-binding domain; the sequence is AGSFHGVVVG…ADAPIGTDIR (110 aa). The B5 domain occupies 401–476; sequence PKRATITLRR…RVYGYNNIPD (76 aa). Mg(2+)-binding residues include aspartate 454, aspartate 460, glutamate 463, and glutamate 464. Positions 701-794 constitute an FDX-ACB domain; the sequence is SRFPANRRDI…LKERFQASLR (94 aa).

This sequence belongs to the phenylalanyl-tRNA synthetase beta subunit family. Type 1 subfamily. In terms of assembly, tetramer of two alpha and two beta subunits. Mg(2+) serves as cofactor.

The protein localises to the cytoplasm. It catalyses the reaction tRNA(Phe) + L-phenylalanine + ATP = L-phenylalanyl-tRNA(Phe) + AMP + diphosphate + H(+). This chain is Phenylalanine--tRNA ligase beta subunit, found in Shigella flexneri.